A 153-amino-acid polypeptide reads, in one-letter code: ORM1-like protein 2 (153 aa).

At 1–21 the chain is on the cytoplasmic side; that stretch reads MNVGVAHSEVNPNTRVMNSRG. The next 2 membrane-spanning stretches (helical) occupy residues 22 to 42 and 43 to 63; these read IWLA…SIPF and FSIP…MYVF. Over 64–105 the chain is Cytoplasmic; that stretch reads LHTVKGTPFETPDQGKARLLTHWEQMDYGLQFTSSRKFLSIS. A helical transmembrane segment spans residues 106–126; the sequence is PIVLYLLASFYTKYDAAHFLI. Over 127-153 the chain is Extracellular; it reads NTASLLSVLLPKLPQFHGVRLFGINKY.

It belongs to the ORM family. In terms of assembly, ceramide-sensitive subunit of the serine palmitoyltransferase (SPT) complex, which is also composed of SPTLC1, SPTLC2/3 and SPTSSA/B.

Its subcellular location is the endoplasmic reticulum membrane. In terms of biological role, plays an essential role in the homeostatic regulation of sphingolipid de novo biosynthesis by modulating the activity of the serine palmitoyltransferase (SPT) in response to ceramide levels. When complexed to SPT, the binding of ceramides to its N-terminus stabilizes a conformation that block SPT substrate entry, hence preventing SPT catalytic activity. Through this mechanism, maintains ceramide levels at sufficient concentrations for the production of complex sphingolipids, but which prevents the accumulation of ceramides to levels that trigger apoptosis. The protein is ORM1-like protein 2 (ORMDL2) of Bos taurus (Bovine).